The chain runs to 524 residues: Cytochrome P450 CYP749A22 (524 aa).

The chain crosses the membrane as a helical span at residues T12–I32. C472 is a heme binding site.

This sequence belongs to the cytochrome P450 family. Heme is required as a cofactor.

The protein localises to the membrane. Probable heme-thiolate monooxygenase. The polypeptide is Cytochrome P450 CYP749A22 (Panax ginseng (Korean ginseng)).